Consider the following 917-residue polypeptide: Thiamine biosynthesis bifunctional protein ThiEC (917 aa).

A thiamine-phosphate synthase region spans residues Met1–Lys243. 4-amino-2-methyl-5-(diphosphooxymethyl)pyrimidine-binding positions include Gln48 to Lys52 and Asp84. Mg(2+) is bound by residues Asp85 and Asp109. 4-amino-2-methyl-5-(diphosphooxymethyl)pyrimidine is bound at residue Ser128. Ser157–Thr159 lines the 2-[(2R,5Z)-2-carboxy-4-methylthiazol-5(2H)-ylidene]ethyl phosphate pocket. Residue Lys160 coordinates 4-amino-2-methyl-5-(diphosphooxymethyl)pyrimidine. 2-[(2R,5Z)-2-carboxy-4-methylthiazol-5(2H)-ylidene]ethyl phosphate-binding positions include Gly196 and Val216–Ser217. The segment at Pro256–His311 is disordered. A phosphomethylpyrimidine synthase region spans residues Gly271–Glu917. Over residues Ala274–Lys290 the composition is skewed to basic and acidic residues. 5-amino-1-(5-phospho-beta-D-ribosyl)imidazole contacts are provided by residues Asn487, Met516, Tyr545, His581, Ser601 to Gly603, Asp642 to Arg645, and Glu681. His685 lines the Zn(2+) pocket. A 5-amino-1-(5-phospho-beta-D-ribosyl)imidazole-binding site is contributed by Tyr708. His749 contributes to the Zn(2+) binding site. 3 residues coordinate [4Fe-4S] cluster: Cys829, Cys832, and Cys837.

The protein in the N-terminal section; belongs to the thiamine-phosphate synthase family. It in the C-terminal section; belongs to the ThiC family. [4Fe-4S] cluster serves as cofactor.

The enzyme catalyses 2-[(2R,5Z)-2-carboxy-4-methylthiazol-5(2H)-ylidene]ethyl phosphate + 4-amino-2-methyl-5-(diphosphooxymethyl)pyrimidine + 2 H(+) = thiamine phosphate + CO2 + diphosphate. It catalyses the reaction 2-(2-carboxy-4-methylthiazol-5-yl)ethyl phosphate + 4-amino-2-methyl-5-(diphosphooxymethyl)pyrimidine + 2 H(+) = thiamine phosphate + CO2 + diphosphate. The catalysed reaction is 4-methyl-5-(2-phosphooxyethyl)-thiazole + 4-amino-2-methyl-5-(diphosphooxymethyl)pyrimidine + H(+) = thiamine phosphate + diphosphate. It carries out the reaction 5-amino-1-(5-phospho-beta-D-ribosyl)imidazole + S-adenosyl-L-methionine = 4-amino-2-methyl-5-(phosphooxymethyl)pyrimidine + CO + 5'-deoxyadenosine + formate + L-methionine + 3 H(+). The protein operates within cofactor biosynthesis; thiamine diphosphate biosynthesis; thiamine phosphate from 4-amino-2-methyl-5-diphosphomethylpyrimidine and 4-methyl-5-(2-phosphoethyl)-thiazole: step 1/1. Functionally, condenses 4-methyl-5-(beta-hydroxyethyl)thiazole monophosphate (THZ-P) and 2-methyl-4-amino-5-hydroxymethyl pyrimidine pyrophosphate (HMP-PP) to form thiamine monophosphate (TMP). Catalyzes the synthesis of the hydroxymethylpyrimidine phosphate (HMP-P) moiety of thiamine from aminoimidazole ribotide (AIR) in a radical S-adenosyl-L-methionine (SAM)-dependent reaction. This Bifidobacterium longum (strain NCC 2705) protein is Thiamine biosynthesis bifunctional protein ThiEC (thiE/thiC).